We begin with the raw amino-acid sequence, 355 residues long: Protein RecA (355 aa).

ATP is bound at residue 72–79; it reads GPESSGKT.

This sequence belongs to the RecA family.

The protein localises to the cytoplasm. Can catalyze the hydrolysis of ATP in the presence of single-stranded DNA, the ATP-dependent uptake of single-stranded DNA by duplex DNA, and the ATP-dependent hybridization of homologous single-stranded DNAs. It interacts with LexA causing its activation and leading to its autocatalytic cleavage. The chain is Protein RecA from Wolbachia sp. subsp. Brugia malayi (strain TRS).